A 139-amino-acid polypeptide reads, in one-letter code: Mitochondrial intermembrane space import and assembly protein 40 (139 aa).

Cystine bridges form between Cys-53–Cys-55, Cys-64–Cys-97, and Cys-74–Cys-87. The CHCH domain occupies 61 to 105 (SGPCGEQFKSAFSCFHYSTEDIKGSDCIDQFRAMQECMQKYPDLY). Short sequence motifs (cx9C motif) lie at residues 64-74 (CGEQFKSAFSC) and 87-97 (CIDQFRAMQEC). The tract at residues 102–139 (PDLYPQDEEEEEEAKPVEPVEETADTKVSAAKEQGTSS) is disordered. The segment covering 106 to 124 (PQDEEEEEEAKPVEPVEET) has biased composition (acidic residues).

In terms of assembly, monomer. Can form homooligomers. Interacts with GFER and forms transient disulfide bonds with GFER. Interacts with MICU1. Interacts with COX19 forming transient intermolecular disulfide bridges. Interacts with COA7 through transient intermolecular disulfide bonds. Interacts with AIFM1; the interaction increases in presence of NADH. Interacts with NDUFB10. Forms intrachain disulfide bridges, but exists in different redox states. As to expression, widely expressed. Present at high level in liver and kidney, followed by lung, brain, heart and spleen (at protein level).

It is found in the mitochondrion intermembrane space. In terms of biological role, central component of a redox-sensitive mitochondrial intermembrane space import machinery which is required for the biogenesis of respiratory chain complexes. Functions as chaperone and catalyzes the formation of disulfide bonds in substrate proteins, such as COX17, COX19, MICU1 and COA7. Required for the import and folding of small cysteine-containing proteins (small Tim) in the mitochondrial intermembrane space (IMS). Required for the import of COA7 in the IMS. Precursor proteins to be imported into the IMS are translocated in their reduced form into the mitochondria. The oxidized form of CHCHD4/MIA40 forms a transient intermolecular disulfide bridge with the reduced precursor protein, resulting in oxidation of the precursor protein that now contains an intramolecular disulfide bond and is able to undergo folding in the IMS. Reduced CHCHD4/MIA40 is then reoxidized by GFER/ERV1 via a disulfide relay system. Mediates formation of disulfide bond in MICU1 in the IMS, promoting formation of the MICU1-MICU2 heterodimer that regulates mitochondrial calcium uptake. The polypeptide is Mitochondrial intermembrane space import and assembly protein 40 (Chchd4) (Mus musculus (Mouse)).